A 346-amino-acid chain; its full sequence is Autophagy-related protein 3 (346 aa).

Residues 85–161 (DFAGDAGHEE…DDDDEAIIRA (77 aa)) form a flexible region region. Cysteine 238 serves as the catalytic Glycyl thioester intermediate. Positions 242–322 (SVMKTLLDRA…DQEVAIRVDQ (81 aa)) are handle region.

The protein belongs to the ATG3 family. Monomer. Interacts with apg-6/atg8 through an intermediate thioester bond through the C-terminal Gly of apg-6/atg8. Also interacts with the 40 amino acid C-terminal region of the E1-like apg-5/atg7 enzyme. Also interacts with the atg12-apg-4/atg5 conjugate.

The protein resides in the cytoplasm. Functionally, E2 conjugating enzyme required for the cytoplasm to vacuole transport (Cvt) and autophagy. Required for selective autophagic degradation of the nucleus (nucleophagy) as well as for mitophagy which contributes to regulate mitochondrial quantity and quality by eliminating the mitochondria to a basal level to fulfill cellular energy requirements and preventing excess ROS production. Responsible for the E2-like covalent binding of phosphatidylethanolamine to the C-terminal Gly of apg-6/atg8. The atg12-apg-4/atg5 conjugate plays a role of an E3 and promotes the transfer of apg-6/atg8 from apg-3/atg3 to phosphatidylethanolamine (PE). This step is required for the membrane association of apg-6/atg8. The formation of the apg-6/atg8-phosphatidylethanolamine conjugate is essential for autophagy and for the cytoplasm to vacuole transport (Cvt). The apg-6/atg8-PE conjugate mediates tethering between adjacent membranes and stimulates membrane hemifusion, leading to expansion of the autophagosomal membrane during autophagy. This is Autophagy-related protein 3 (apg-3) from Neurospora crassa (strain ATCC 24698 / 74-OR23-1A / CBS 708.71 / DSM 1257 / FGSC 987).